Reading from the N-terminus, the 305-residue chain is Ribonuclease BN (305 aa).

Zn(2+)-binding residues include histidine 64, histidine 66, aspartate 68, histidine 69, histidine 141, aspartate 212, and histidine 270. The Proton acceptor role is filled by aspartate 68.

The protein belongs to the RNase Z family. RNase BN subfamily. In terms of assembly, homodimer. It depends on Zn(2+) as a cofactor.

Its function is as follows. Zinc phosphodiesterase, which has both exoribonuclease and endoribonuclease activities. This is Ribonuclease BN from Citrobacter koseri (strain ATCC BAA-895 / CDC 4225-83 / SGSC4696).